The chain runs to 88 residues: UPF0335 protein NGR_c28390 (88 aa).

This sequence belongs to the UPF0335 family.

This chain is UPF0335 protein NGR_c28390, found in Sinorhizobium fredii (strain NBRC 101917 / NGR234).